The following is a 245-amino-acid chain: Sugar fermentation stimulation protein homolog (245 aa).

Belongs to the SfsA family.

The protein is Sugar fermentation stimulation protein homolog of Rhodospirillum rubrum (strain ATCC 11170 / ATH 1.1.1 / DSM 467 / LMG 4362 / NCIMB 8255 / S1).